A 217-amino-acid polypeptide reads, in one-letter code: Sentrin-specific protease 8 (217 aa).

N-acetylmethionine is present on methionine 1. Residues 11 to 174 are protease; sequence SLLRQSDVSL…MYVICNTEAL (164 aa). Catalysis depends on residues histidine 102 and aspartate 119. Cysteine 163 serves as the catalytic Nucleophile.

Belongs to the peptidase C48 family.

In terms of biological role, protease that catalyzes two essential functions in the NEDD8 pathway: processing of full-length NEDD8 to its mature form and deconjugation of NEDD8 from targeted proteins such as cullins or p53. The polypeptide is Sentrin-specific protease 8 (Senp8) (Rattus norvegicus (Rat)).